Here is a 180-residue protein sequence, read N- to C-terminus: Adipocyte-related X-chromosome expressed sequence 1 (180 aa).

Over 1–11 the chain is Cytoplasmic; that stretch reads MNSLLSRANSL. A helical; Signal-anchor for type II membrane protein membrane pass occupies residues 12 to 32; that stretch reads FAFTLSVMAALTLGCILTTAF. At 33 to 180 the chain is on the lumenal side; sequence KDRSAPVRLH…PDSYEIATTF (148 aa). A glycan (N-linked (GlcNAc...) asparagine) is linked at N141.

It belongs to the SPCS3 family. As to expression, strongly expressed in epididymal white and brown adipose tissue with low levels in heart.

It is found in the endoplasmic reticulum membrane. Functionally, plays a role in adipogenesis. In Mus musculus (Mouse), this protein is Adipocyte-related X-chromosome expressed sequence 1.